A 189-amino-acid polypeptide reads, in one-letter code: Glutathione-dependent formaldehyde-activating enzyme (189 aa).

The region spanning 20–167 (FAGGTLVCKC…LKELGLEPYD (148 aa)) is the CENP-V/GFA domain. Cys-27, Cys-29, Cys-48, Cys-50, Cys-53, Cys-95, and Cys-98 together coordinate Zn(2+).

It belongs to the Gfa family. Requires Zn(2+) as cofactor.

It carries out the reaction S-(hydroxymethyl)glutathione = glutathione + formaldehyde. Its pathway is one-carbon metabolism; formaldehyde degradation; formate from formaldehyde (glutathione route): step 1/3. Catalyzes the condensation of formaldehyde and glutathione to S-hydroxymethylglutathione. In Rhodopseudomonas palustris (strain BisA53), this protein is Glutathione-dependent formaldehyde-activating enzyme.